The following is a 459-amino-acid chain: Phosphoenolpyruvate carboxylase (459 aa).

The protein belongs to the PEPCase type 2 family. In terms of assembly, homotetramer. The cofactor is Mg(2+).

The catalysed reaction is oxaloacetate + phosphate = phosphoenolpyruvate + hydrogencarbonate. Its function is as follows. Catalyzes the irreversible beta-carboxylation of phosphoenolpyruvate (PEP) to form oxaloacetate (OAA), a four-carbon dicarboxylic acid source for the tricarboxylic acid cycle. The sequence is that of Phosphoenolpyruvate carboxylase from Pyrobaculum calidifontis (strain DSM 21063 / JCM 11548 / VA1).